The chain runs to 427 residues: MSRSEDLFAKAQKHIPGGVNSPVRAFKSVGGTPLFFKHAEGAYVVDEDDKRYVDYVGSWGPMILGHGHPDVLDSVRKQLEHGLSYGAPTAMETDMADLVCSLVPSMEMVRMVSSGTEATMSAIRLARGYTGRDAIIKFEGCYHGHSDSLLVKAGSGLLTQGVPSSAGVPADFAKHTLTLPFNDIAAVEKTLAEVSQTVACIIVEPVAGNMNCVPPAPGFLEGLREQCDKHGVVLIFDEVMTGFRVSLGGAQGHYGIKPDLSTFGKIVGGGMPVGCFGGKREIMGCIAPLGPVYQAGTLSGNPLAMAAGLTTLKLISRPGFHAELTDYTSRMLDGLQQRADAAGVPFVTTQAGAMFGLYFSGADDIVTFEDVMASDAERFKRFFHLMLDGGVYLAPSAFEAGFTSIAHGDKELQITLDAAEKAFAALK.

Position 265 is an N6-(pyridoxal phosphate)lysine (Lys265).

It belongs to the class-III pyridoxal-phosphate-dependent aminotransferase family. HemL subfamily. As to quaternary structure, homodimer. Pyridoxal 5'-phosphate is required as a cofactor.

The protein localises to the cytoplasm. It carries out the reaction (S)-4-amino-5-oxopentanoate = 5-aminolevulinate. It functions in the pathway porphyrin-containing compound metabolism; protoporphyrin-IX biosynthesis; 5-aminolevulinate from L-glutamyl-tRNA(Glu): step 2/2. This chain is Glutamate-1-semialdehyde 2,1-aminomutase, found in Pseudomonas putida (strain GB-1).